A 202-amino-acid polypeptide reads, in one-letter code: Syndecan-4 (202 aa).

Residues 1 to 22 (MASPRLLALLLLLVGAFNAAAA) form the signal peptide. The Extracellular segment spans residues 23-152 (ESIRETEVIN…NIFERTEVLS (130 aa)). Disordered regions lie at residues 41–75 (YFSG…GPED) and 87–112 (VPLD…ELEE). S43 carries an O-linked (Xyl...) (glycosaminoglycan) serine glycan. A compositionally biased stretch (acidic residues) spans 46–63 (LPDDEDVGGPGQEPDDFE). 2 O-linked (Xyl...) (glycosaminoglycan) serine glycosylation sites follow: S65 and S67. The helical transmembrane segment at 153 to 173 (ALIVGGIVGILFAVFLVLLLV) threads the bilayer. The Cytoplasmic portion of the chain corresponds to 174–202 (YRMKKKDEGSYDLGKKPIYKKAPTNEFYA).

It belongs to the syndecan proteoglycan family. In terms of assembly, homodimer. Interacts with CDCP1 and SDCBP. Interacts (via its cytoplasmic domain) with GIPC (via its PDZ domain). Interacts (via its cytoplasmic domain) with NUDT16L1. Interacts with DNM2; this interaction is markedly enhanced at focal ahesion site upon induction of focal adhesions and stress-fiber formation. Shedding, cleavage of the extracellular domain to release a soluble form, is enhanced by a number of factors such as heparanase, growth factor receptor action for example by thrombin or EGF. Physiological events such as stress or wound healing can activate the shedding. PMA-mediated shedding is inhibited by TIMP3. In terms of processing, O-glycosylated; contains both chondroitin sulfate and heparan sulfate. Ser-43, Ser-65 and Ser-67 can all be modified by either chondroitin sulfate or heparan sulfate, and the protein exists in forms that contain only chondroitin sulfate, only heparan sulfate and both chondroitin sulfate and heparan sulfate.

It is found in the membrane. The protein resides in the secreted. Cell surface proteoglycan which regulates exosome biogenesis in concert with SDCBP and PDCD6IP. In Sus scrofa (Pig), this protein is Syndecan-4.